The sequence spans 258 residues: Imidazole glycerol phosphate synthase subunit HisF (258 aa).

Residues Asp11 and Asp130 contribute to the active site.

Belongs to the HisA/HisF family. As to quaternary structure, heterodimer of HisH and HisF.

The protein localises to the cytoplasm. The enzyme catalyses 5-[(5-phospho-1-deoxy-D-ribulos-1-ylimino)methylamino]-1-(5-phospho-beta-D-ribosyl)imidazole-4-carboxamide + L-glutamine = D-erythro-1-(imidazol-4-yl)glycerol 3-phosphate + 5-amino-1-(5-phospho-beta-D-ribosyl)imidazole-4-carboxamide + L-glutamate + H(+). It functions in the pathway amino-acid biosynthesis; L-histidine biosynthesis; L-histidine from 5-phospho-alpha-D-ribose 1-diphosphate: step 5/9. IGPS catalyzes the conversion of PRFAR and glutamine to IGP, AICAR and glutamate. The HisF subunit catalyzes the cyclization activity that produces IGP and AICAR from PRFAR using the ammonia provided by the HisH subunit. This Haemophilus influenzae (strain PittEE) protein is Imidazole glycerol phosphate synthase subunit HisF.